The following is a 355-amino-acid chain: N-acetyl-gamma-glutamyl-phosphate reductase (355 aa).

Cys-152 is a catalytic residue.

This sequence belongs to the NAGSA dehydrogenase family. Type 1 subfamily.

The protein localises to the cytoplasm. It carries out the reaction N-acetyl-L-glutamate 5-semialdehyde + phosphate + NADP(+) = N-acetyl-L-glutamyl 5-phosphate + NADPH + H(+). The protein operates within amino-acid biosynthesis; L-arginine biosynthesis; N(2)-acetyl-L-ornithine from L-glutamate: step 3/4. In terms of biological role, catalyzes the NADPH-dependent reduction of N-acetyl-5-glutamyl phosphate to yield N-acetyl-L-glutamate 5-semialdehyde. The protein is N-acetyl-gamma-glutamyl-phosphate reductase of Psychrobacter sp. (strain PRwf-1).